Here is a 350-residue protein sequence, read N- to C-terminus: tRNA N6-adenosine threonylcarbamoyltransferase (350 aa).

Fe cation-binding residues include histidine 113 and histidine 117. Residues leucine 135–glycine 139, aspartate 169, glycine 182, aspartate 186, and asparagine 282 contribute to the substrate site. Aspartate 310 is a binding site for Fe cation.

It belongs to the KAE1 / TsaD family. It depends on Fe(2+) as a cofactor.

It localises to the cytoplasm. It catalyses the reaction L-threonylcarbamoyladenylate + adenosine(37) in tRNA = N(6)-L-threonylcarbamoyladenosine(37) in tRNA + AMP + H(+). Its function is as follows. Required for the formation of a threonylcarbamoyl group on adenosine at position 37 (t(6)A37) in tRNAs that read codons beginning with adenine. Is involved in the transfer of the threonylcarbamoyl moiety of threonylcarbamoyl-AMP (TC-AMP) to the N6 group of A37, together with TsaE and TsaB. TsaD likely plays a direct catalytic role in this reaction. The sequence is that of tRNA N6-adenosine threonylcarbamoyltransferase from Corynebacterium diphtheriae (strain ATCC 700971 / NCTC 13129 / Biotype gravis).